Consider the following 196-residue polypeptide: MTWQSDYSRDYEVKNHMECQNRSDKYIWSPHDAYFYKGLSELIVDIDRLIYLSLEKIRKDFVFINLSTDSLSEFINRDNEWLSAVKGKQVVLIAARKSEALANYWYYNSNIRGVVYAGLSRDIRKELVYVINGRFLRKDIKKDKITDREMEIIRMTAQGMQPKSIARIENCSVKTVYTHRRNAEAKLYSKIYKLVQ.

The HTH luxR-type domain occupies 138–196; sequence KDIKKDKITDREMEIIRMTAQGMQPKSIARIENCSVKTVYTHRRNAEAKLYSKIYKLVQ. The segment at residues 162–181 is a DNA-binding region (H-T-H motif); sequence PKSIARIENCSVKTVYTHRR.

The protein belongs to the EcpR/MatA family.

The protein resides in the cytoplasm. Its function is as follows. Part of the ecpRABCDE operon, which encodes the E.coli common pilus (ECP). ECP is found in both commensal and pathogenic strains and plays a dual role in early-stage biofilm development and host cell recognition. Positively regulates the expression of the ecp operon. The protein is HTH-type transcriptional regulator EcpR (ecpR) of Escherichia coli (strain K12 / DH10B).